Reading from the N-terminus, the 187-residue chain is Elongation factor P (187 aa).

It belongs to the elongation factor P family.

It is found in the cytoplasm. Its pathway is protein biosynthesis; polypeptide chain elongation. Involved in peptide bond synthesis. Stimulates efficient translation and peptide-bond synthesis on native or reconstituted 70S ribosomes in vitro. Probably functions indirectly by altering the affinity of the ribosome for aminoacyl-tRNA, thus increasing their reactivity as acceptors for peptidyl transferase. The sequence is that of Elongation factor P from Roseiflexus sp. (strain RS-1).